The sequence spans 427 residues: 3-phosphoshikimate 1-carboxyvinyltransferase (427 aa).

Positions 22, 23, and 27 each coordinate 3-phosphoshikimate. A phosphoenolpyruvate-binding site is contributed by Lys22. 2 residues coordinate phosphoenolpyruvate: Gly96 and Arg124. 3-phosphoshikimate is bound by residues Ser169, Ser170, Gln171, Ser197, Asp313, Asn336, and Lys340. Residue Gln171 participates in phosphoenolpyruvate binding. Asp313 (proton acceptor) is an active-site residue. Residues Arg344, Arg386, and Lys411 each contribute to the phosphoenolpyruvate site.

The protein belongs to the EPSP synthase family. As to quaternary structure, monomer.

The protein resides in the cytoplasm. The enzyme catalyses 3-phosphoshikimate + phosphoenolpyruvate = 5-O-(1-carboxyvinyl)-3-phosphoshikimate + phosphate. It participates in metabolic intermediate biosynthesis; chorismate biosynthesis; chorismate from D-erythrose 4-phosphate and phosphoenolpyruvate: step 6/7. Its function is as follows. Catalyzes the transfer of the enolpyruvyl moiety of phosphoenolpyruvate (PEP) to the 5-hydroxyl of shikimate-3-phosphate (S3P) to produce enolpyruvyl shikimate-3-phosphate and inorganic phosphate. The chain is 3-phosphoshikimate 1-carboxyvinyltransferase from Klebsiella pneumoniae (strain 342).